The following is a 295-amino-acid chain: Bifunctional protein FolD (295 aa).

NADP(+)-binding positions include 165-167 (GRG), Ser-192, and Ile-233.

It belongs to the tetrahydrofolate dehydrogenase/cyclohydrolase family. Homodimer.

It carries out the reaction (6R)-5,10-methylene-5,6,7,8-tetrahydrofolate + NADP(+) = (6R)-5,10-methenyltetrahydrofolate + NADPH. It catalyses the reaction (6R)-5,10-methenyltetrahydrofolate + H2O = (6R)-10-formyltetrahydrofolate + H(+). It functions in the pathway one-carbon metabolism; tetrahydrofolate interconversion. Catalyzes the oxidation of 5,10-methylenetetrahydrofolate to 5,10-methenyltetrahydrofolate and then the hydrolysis of 5,10-methenyltetrahydrofolate to 10-formyltetrahydrofolate. The chain is Bifunctional protein FolD from Tropheryma whipplei (strain TW08/27) (Whipple's bacillus).